A 599-amino-acid chain; its full sequence is Aspartate--tRNA(Asp/Asn) ligase (599 aa).

Glutamate 173 is an L-aspartate binding site. The interval 197–200 (QLYK) is aspartate. Arginine 219 contributes to the L-aspartate binding site. ATP-binding positions include 219-221 (RDE) and glutamine 228. L-aspartate is bound at residue histidine 451. Residue glutamate 484 coordinates ATP. An L-aspartate-binding site is contributed by arginine 491. 536-539 (GLDR) is a binding site for ATP.

The protein belongs to the class-II aminoacyl-tRNA synthetase family. Type 1 subfamily. Homodimer.

It localises to the cytoplasm. It carries out the reaction tRNA(Asx) + L-aspartate + ATP = L-aspartyl-tRNA(Asx) + AMP + diphosphate. Aspartyl-tRNA synthetase with relaxed tRNA specificity since it is able to aspartylate not only its cognate tRNA(Asp) but also tRNA(Asn). Reaction proceeds in two steps: L-aspartate is first activated by ATP to form Asp-AMP and then transferred to the acceptor end of tRNA(Asp/Asn). This Methylococcus capsulatus (strain ATCC 33009 / NCIMB 11132 / Bath) protein is Aspartate--tRNA(Asp/Asn) ligase.